The sequence spans 539 residues: GMP synthase [glutamine-hydrolyzing] (539 aa).

In terms of domain architecture, Glutamine amidotransferase type-1 spans 4–202 (KILILDFGSQ…VLQIAGAKPD (199 aa)). C81 (nucleophile) is an active-site residue. Residues H176 and E178 contribute to the active site. Residues 203-395 (WIMSNHIEEA…LGLPPEMVYR (193 aa)) enclose the GMPS ATP-PPase domain. 230-236 (SGGVDSS) serves as a coordination point for ATP.

As to quaternary structure, homodimer.

The catalysed reaction is XMP + L-glutamine + ATP + H2O = GMP + L-glutamate + AMP + diphosphate + 2 H(+). Its pathway is purine metabolism; GMP biosynthesis; GMP from XMP (L-Gln route): step 1/1. Its function is as follows. Catalyzes the synthesis of GMP from XMP. In Burkholderia ambifaria (strain ATCC BAA-244 / DSM 16087 / CCUG 44356 / LMG 19182 / AMMD) (Burkholderia cepacia (strain AMMD)), this protein is GMP synthase [glutamine-hydrolyzing].